The following is a 992-amino-acid chain: Aminopeptidase Q (992 aa).

Topologically, residues 2 to 13 (GPPSSSGFYVSR) are cytoplasmic. Residues 14–34 (AVALLLAALAAALLLALAVLA) traverse the membrane as a helical; Signal-anchor for type II membrane protein segment. Residues 35 to 992 (ALYGRCARVQ…RMTAWLRKNT (958 aa)) are Extracellular-facing. The segment at 48–92 (LHHGGVPDAASSPRGTQEEQLPTWPPRPTREPAGTATPGHWRPPG) is disordered. An N-linked (GlcNAc...) asparagine glycan is attached at N133. Substrate is bound at residue E241. 4 N-linked (GlcNAc...) asparagine glycosylation sites follow: N262, N289, N347, and N361. Residue 380–384 (SAMEN) coordinates substrate. Position 416 (H416) interacts with Zn(2+). Residue E417 is the Proton acceptor of the active site. Zn(2+)-binding residues include H420 and E439. N489 carries an N-linked (GlcNAc...) asparagine glycan. Y505 acts as the Proton donor in catalysis. N584, N602, N609, N655, N811, N850, and N889 each carry an N-linked (GlcNAc...) asparagine glycan.

The protein belongs to the peptidase M1 family. The cofactor is Zn(2+). Expressed in skin. Expression levels do not differ between dark and light skin areas.

The protein resides in the membrane. Functionally, metalloprotease which may be important for placentation by regulating biological activity of key peptides at the embryo-maternal interface. Involved in coat pigmentation patterns. During skin development, may be required to establish the periodicity of tabby markings, initiating a pre-pattern at or before hair follicle development. This is Aminopeptidase Q (LVRN) from Acinonyx jubatus (Cheetah).